The chain runs to 81 residues: GAMMA-ctenitoxin-Pn1a (81 aa).

A signal peptide spans 1–16 (MKVAIVFLSLLVLAFA). Residues 17–34 (SESIEENREEFPVEESAR) constitute a propeptide that is removed on maturation. 5 disulfides stabilise this stretch: C35/C49, C42/C55, C46/C81, C48/C65, and C57/C63.

Belongs to the neurotoxin 03 (Tx2) family. 05 subfamily. As to expression, expressed by the venom gland.

The protein resides in the secreted. This insecticidal neurotoxin targets two types of channels/receptors. It reversibly inhibits the N-methyl-D-aspartate (NMDA)-subtype of ionotropic glutamate receptor (GRIN). It inhibits glutamate uptake from rat brain synaptosomes, and blocks GRIN in hippocampal slices. It also acts on sodium channels of both insects and mammals. On sodium channel insects, it strongly slows down channel inactivation (EC(50)=212.5 nM) and causes an increase (105%) in peak amplitude (at 1 uM) of B.germanica sodium channel (Nav), whereas it inhibits all mammalien sodium channels tested with the following order of potency: Nav1.3/SCN3A (IC(50)=1.5 uM) &gt; Nav1.6/SCN8A &gt; Nav1.5/SCN5A &gt; Nav1.4/SCN4A &gt;= Nav1.2/SCN2A. In vivo, it is highly toxic to house fly (Musca domestica), cockroach (Periplaneta americana), and cricket (Acheta domesticus). In different rat pain models (induced by PGE2, carrageenan or glutamate), it shows antinociceptive effect that may be related to an inhibitory activity on the glutamatergic system. The sequence is that of GAMMA-ctenitoxin-Pn1a from Phoneutria nigriventer (Brazilian armed spider).